The following is a 349-amino-acid chain: N-acetyl-gamma-glutamyl-phosphate reductase (349 aa).

Cys153 is an active-site residue.

Belongs to the NAGSA dehydrogenase family. Type 1 subfamily.

The protein localises to the cytoplasm. It catalyses the reaction N-acetyl-L-glutamate 5-semialdehyde + phosphate + NADP(+) = N-acetyl-L-glutamyl 5-phosphate + NADPH + H(+). It functions in the pathway amino-acid biosynthesis; L-arginine biosynthesis; N(2)-acetyl-L-ornithine from L-glutamate: step 3/4. Functionally, catalyzes the NADPH-dependent reduction of N-acetyl-5-glutamyl phosphate to yield N-acetyl-L-glutamate 5-semialdehyde. This Magnetococcus marinus (strain ATCC BAA-1437 / JCM 17883 / MC-1) protein is N-acetyl-gamma-glutamyl-phosphate reductase.